The sequence spans 199 residues: MRSFVLRARAAPTTSKALLEGVGNEAHTEILAHTMMNTMFVAQSHREDVVVHLVLESTKDYSRTITIRSNDITNIGGFHESTLIAAVARALDASVGMGKEQLREVEPGITVRTVSFERLVQELAEDHQLYMLDKKGEFVRDAEIGENPCFLLTDHIPMPKKSFNSLKRLGTEKISLGPKMLFASQCVVLIHNELDIREF.

Leu-132 and Cys-186 together coordinate S-adenosyl-L-methionine.

It belongs to the methyltransferase superfamily. TrmY family.

It is found in the cytoplasm. This Vibrio parahaemolyticus serotype O3:K6 (strain RIMD 2210633) protein is Putative pseudouridine methyltransferase.